The chain runs to 394 residues: Elongation factor Tu (394 aa).

A tr-type G domain is found at 10 to 204; the sequence is KPHVNIGTIG…AVDSYIPQPV (195 aa). The interval 19-26 is G1; the sequence is GHVDHGKT. A GTP-binding site is contributed by 19–26; the sequence is GHVDHGKT. Residue threonine 26 coordinates Mg(2+). A G2 region spans residues 60–64; the sequence is GITIS. The tract at residues 81–84 is G3; that stretch reads DCPG. Residues 81 to 85 and 136 to 139 each bind GTP; these read DCPGH and NKVD. Positions 136–139 are G4; it reads NKVD. The G5 stretch occupies residues 174-176; it reads SAL.

This sequence belongs to the TRAFAC class translation factor GTPase superfamily. Classic translation factor GTPase family. EF-Tu/EF-1A subfamily. Monomer.

Its subcellular location is the cytoplasm. It carries out the reaction GTP + H2O = GDP + phosphate + H(+). Functionally, GTP hydrolase that promotes the GTP-dependent binding of aminoacyl-tRNA to the A-site of ribosomes during protein biosynthesis. The sequence is that of Elongation factor Tu from Rickettsia massiliae (strain Mtu5).